Reading from the N-terminus, the 360-residue chain is Histidinol-phosphate aminotransferase (360 aa).

N6-(pyridoxal phosphate)lysine is present on K222.

The protein belongs to the class-II pyridoxal-phosphate-dependent aminotransferase family. Histidinol-phosphate aminotransferase subfamily. Homodimer. Pyridoxal 5'-phosphate is required as a cofactor.

The catalysed reaction is L-histidinol phosphate + 2-oxoglutarate = 3-(imidazol-4-yl)-2-oxopropyl phosphate + L-glutamate. Its pathway is amino-acid biosynthesis; L-histidine biosynthesis; L-histidine from 5-phospho-alpha-D-ribose 1-diphosphate: step 7/9. The chain is Histidinol-phosphate aminotransferase from Listeria monocytogenes serotype 4b (strain CLIP80459).